A 929-amino-acid chain; its full sequence is Diacylglycerol kinase zeta (929 aa).

The span at 1–14 shows a compositional bias: basic and acidic residues; the sequence is MEPRDPSPEARSSD. 2 disordered regions span residues 1-46 and 59-80; these read MEPR…RRFP and KSGL…GESE. Residues 15–24 are compositionally biased toward low complexity; the sequence is SESASASSSG. A compositionally biased stretch (basic and acidic residues) spans 25 to 37; that stretch reads SERDADPEPDKAP. 2 Phorbol-ester/DAG-type zinc fingers span residues 98–153 and 173–231; these read HIWF…NFRC and HHWV…EEPC. The segment at 257–281 is disordered; that stretch reads KASKKKKRASFKRRSSKKGPEEGRW. Residues 258–273 show a composition bias toward basic residues; sequence ASKKKKRASFKRRSSK. A mediates interaction with RASGRP1 region spans residues 279–417; that stretch reads GRWRPFIIRP…HVEEGNVVQL (139 aa). A DAGKc domain is found at 292–426; the sequence is PLMKPLLVFV…LDRWDLRAEP (135 aa). The Nuclear export signal signature appears at 362 to 370; that stretch reads LSTLDQLRL. Residues 421–441 are disordered; it reads DLRAEPNPEAGPEERDDGATD. A Phosphoserine modification is found at S706. The segment at 760–783 is disordered; the sequence is ARPDLPTPTSPLPASPCSPTPGSL. Positions 764–778 are enriched in pro residues; it reads LPTPTSPLPASPCSP. S782 is subject to Phosphoserine. ANK repeat units lie at residues 823-853 and 858-887; these read QSRT…EILD and NGET…SLMK. The short motif at 925 to 929 is the PDZ-binding element; the sequence is QETAV.

It belongs to the eukaryotic diacylglycerol kinase family. In terms of assembly, interacts (via PDZ-binding motif) with the PDZ domain of the syntrophin SNTG1 and that of SNX27. Interacts with IRS1 in the absence of insulin; insulin stimulation decreases this interaction. Found in a ternary complex with IRS1 and PIP5K1A in the absence of insulin. Interacts with PIP5K1A. Forms a signaling complex with RASGRP1 and HRAS.

The protein localises to the nucleus. It localises to the cytoplasm. It is found in the cytosol. The protein resides in the cell membrane. Its subcellular location is the cell projection. The protein localises to the lamellipodium. The enzyme catalyses a 1,2-diacyl-sn-glycerol + ATP = a 1,2-diacyl-sn-glycero-3-phosphate + ADP + H(+). It catalyses the reaction a 1-O-alkyl-sn-glycerol + ATP = a 1-O-alkyl-sn-glycero-3-phosphate + ADP + H(+). The catalysed reaction is 1-O-alkyl-2-acyl-sn-glycerol + ATP = 1-O-alkyl-2-acyl-sn-glycero-3-phosphate + ADP + H(+). It carries out the reaction 1,2-didecanoyl-sn-glycerol + ATP = 1,2-didecanoyl-sn-glycero-3-phosphate + ADP + H(+). The enzyme catalyses 1,2-ditetradecanoyl-sn-glycerol + ATP = 1,2-ditetradecanoyl-sn-glycero-3-phosphate + ADP + H(+). It catalyses the reaction 1-hexadecanoyl-2-(9Z-octadecenoyl)-sn-glycerol + ATP = 1-hexadecanoyl-2-(9Z-octadecenoyl)-sn-glycero-3-phosphate + ADP + H(+). The catalysed reaction is 1-hexadecanoyl-2-(5Z,8Z,11Z,14Z-eicosatetraenoyl)-sn-glycerol + ATP = 1-hexadecanoyl-2-(5Z,8Z,11Z,14Z-eicosatetraenoyl)-sn-glycero-3-phosphate + ADP + H(+). It carries out the reaction 1-octadecanoyl-2-(9Z-octadecenoyl)-sn-glycerol + ATP = 1-octadecanoyl-2-(9Z-octadecenoyl)-sn-glycero-3-phosphate + ADP + H(+). The enzyme catalyses 1-octadecanoyl-2-(5Z,8Z,11Z,14Z-eicosatetraenoyl)-sn-glycerol + ATP = 1-octadecanoyl-2-(5Z,8Z,11Z,14Z-eicosatetraenoyl)-sn-glycero-3-phosphate + ADP + H(+). It catalyses the reaction 1-octadecanoyl-2-(4Z,7Z,10Z,13Z,16Z,19Z-docosahexaenoyl)-sn-glycerol + ATP = 1-octadecanoyl-2-(4Z,7Z,10Z,13Z,16Z,19Z-docosahexaenoyl)-sn-glycero-3-phosphate + ADP + H(+). The catalysed reaction is 1,2-di-(9Z-octadecenoyl)-sn-glycerol + ATP = 1,2-di-(9Z-octadecenoyl)-sn-glycero-3-phosphate + ADP + H(+). It carries out the reaction 1-(9Z-octadecenoyl)-2-hexadecanoyl-sn-glycerol + ATP = 1-(9Z)-octadecenoyl-2-hexadecanoyl-sn-glycero-3-phosphate + ADP + H(+). The enzyme catalyses 1-eicosanoyl-2-(5Z,8Z,11Z,14Z)-eicosatetraenoyl-sn-glycerol + ATP = 1-eicosanoyl-2-(5Z,8Z,11Z,14Z)-eicosatetraenoyl-sn-glycero-3-phosphate + ADP + H(+). It catalyses the reaction 1,2-di-(5Z,8Z,11Z,14Z)-eicosatetraenoyl-sn-glycerol + ATP = 1,2-di-(5Z,8Z,11Z,14Z)-eicosatetraenoyl-sn-glycero-3-phosphate + ADP + H(+). The catalysed reaction is 1-O-hexadecyl-2-acetyl-sn-glycerol + ATP = 1-O-hexadecyl-2-acetyl-sn-glycero-3-phosphate + ADP + H(+). It carries out the reaction 1-O-hexadecyl-2-(5Z,8Z,11Z,14Z-eicosatetraenoyl)-sn-glycerol + ATP = 1-O-hexadecyl-2-(5Z,8Z,11Z,14Z-eicosatetraenoyl)-sn-glycero-3-phosphate + ADP + H(+). The enzyme catalyses 1-O-hexadecyl-2-(9Z-octadecenoyl)-sn-glycerol + ATP = 1-O-hexadecyl-2-(9Z-octadecenoyl)-sn-glycero-3-phosphate + ADP + H(+). It catalyses the reaction 1-O-hexadecyl-sn-glycerol + ATP = 1-O-hexadecyl-sn-glycero-3-phosphate + ADP + H(+). The protein operates within lipid metabolism; glycerolipid metabolism. Its function is as follows. Diacylglycerol kinase that converts diacylglycerol/DAG into phosphatidic acid/phosphatidate/PA and regulates the respective levels of these two bioactive lipids. Thereby, acts as a central switch between the signaling pathways activated by these second messengers with different cellular targets and opposite effects in numerous biological processes. Also plays an important role in the biosynthesis of complex lipids. Does not exhibit an acyl chain-dependent substrate specificity among diacylglycerol species. Can also phosphorylate 1-alkyl-2-acylglycerol in vitro but less efficiently and with a preference for alkylacylglycerols containing an arachidonoyl group. The biological processes it is involved in include T cell activation since it negatively regulates T-cell receptor signaling which is in part mediated by diacylglycerol. By generating phosphatidic acid, stimulates PIP5KIA activity which regulates actin polymerization. Through the same mechanism could also positively regulate insulin-induced translocation of SLC2A4 to the cell membrane. Regulates RASGRP1 activity. In Rattus norvegicus (Rat), this protein is Diacylglycerol kinase zeta.